The sequence spans 319 residues: Acetyl esterase (319 aa).

The short motif at His91–Gly93 is the Involved in the stabilization of the negatively charged intermediate by the formation of the oxyanion hole element. Active-site residues include Ser165, Asp262, and His292.

It belongs to the 'GDXG' lipolytic enzyme family. Homodimer. Interacts with MalT and MelA.

The protein localises to the cytoplasm. Displays esterase activity towards short chain fatty esters (acyl chain length of up to 8 carbons). Able to hydrolyze triacetylglycerol (triacetin) and tributyrylglycerol (tributyrin), but not trioleylglycerol (triolein) or cholesterol oleate. Negatively regulates MalT activity by antagonizing maltotriose binding. Inhibits MelA galactosidase activity. This chain is Acetyl esterase, found in Escherichia coli O127:H6 (strain E2348/69 / EPEC).